A 463-amino-acid chain; its full sequence is Alpha-L-arabinofuranosidase B (463 aa).

The first 26 residues, 1-26 (MIPQLNRNYAWAIALGLVARSSLVSA), serve as a signal peptide directing secretion. A catalytic region spans residues 27–308 (GPCDIYASGG…ILGIGGHNSK (282 aa)). A disulfide bridge connects residues cysteine 29 and cysteine 39. Residue asparagine 81 is glycosylated (N-linked (GlcNAc...) asparagine). 2 disulfides stabilise this stretch: cysteine 89/cysteine 94 and cysteine 184/cysteine 185. Aspartate 227 serves as a coordination point for substrate. The active-site Nucleophile is the glutamate 229. Residue asparagine 230 coordinates substrate. Asparagine 280 carries an N-linked (GlcNAc...) asparagine glycan. Glycine 304 contributes to the substrate binding site. The ABD stretch occupies residues 309–463 (LTVGSSISLR…VSWVVSASFA (155 aa)). An N-linked (GlcNAc...) asparagine glycan is attached at asparagine 332. A disulfide bridge connects residues cysteine 366 and cysteine 404. Substrate contacts are provided by histidine 381, asparagine 383, phenylalanine 384, histidine 428, aspartate 430, leucine 433, and aspartate 453.

It belongs to the glycosyl hydrolase 54 family. Residue Asn-280 is mannosylated with up to 7 mannose residues.

It localises to the secreted. It catalyses the reaction Hydrolysis of terminal non-reducing alpha-L-arabinofuranoside residues in alpha-L-arabinosides.. The protein operates within glycan metabolism; L-arabinan degradation. Secreted alpha-L-arabinofuranosidase that actively hydrolyzes p-NP-alpha-L-arabinofuranoside and is specific for furanose configuration of the carbohydrate ring. Also exhibits significant activity against polymeric arabinose-containing substrates such as arabinan and arabinoxylan, a major component of plant hemicellulose. The chain is Alpha-L-arabinofuranosidase B (abfB) from Penicillium canescens.